We begin with the raw amino-acid sequence, 390 residues long: MKYDFLSKIPTDTKKIDYHHKKNIVKCATKIIKHFIDYDEVVTVAEMQSGKTEVMKRLIYLIRTHNDKLRSLNIEIDKYNIYLVLCASSINLKEQLKIKLPEIKHKIYHLNDIINFIKNEYENESLFLSMSDSSLIIFDECHCDIECSKTIDKFRTILDSYAKDNSTTYYKVGFSATPYEQVVAGFPKAIMKPGKGYYGIKDMFELNENSKPILFQAKDLTETDQVEDFFREISIDSWYYIFRLPGKNSSKETVINNIINYLRKNRIKFDSYIYDMNYRSNINDLIKNKPSKPTIIFIKEKLRLGEYLDTKYIYLVHDDPDNGHTHTTAQSLLGRCCGYHKKSHQTVIYCDYEKAWEHYQWIINDYDIDYIPTNAKYIKSNKQTKTNCMY.

This is an uncharacterized protein from Acanthamoeba polyphaga (Amoeba).